Here is a 614-residue protein sequence, read N- to C-terminus: Probable LRR receptor-like serine/threonine-protein kinase At5g45780 (614 aa).

An N-terminal signal peptide occupies residues 1–26 (MEISLMKFLFLGIWVYYYSVLDSVSA). Over 27 to 242 (MDSLLSPKGV…NSKHHSLVLS (216 aa)) the chain is Extracellular. LRR repeat units lie at residues 104-126 (HLHTLLLQNNQLTGPIPSELGQL), 128-151 (ELETLDLSGNRFSGEIPASLGFLT), 152-174 (HLNYLRLSRNLLSGQVPHLVAGL), and 176-197 (GLSFLDLSFNNLSGPTPNISAK). N186, N193, and N224 each carry an N-linked (GlcNAc...) asparagine glycan. The helical transmembrane segment at 243–263 (FAFGIVVAFIISLMFLFFWVL) threads the bilayer. At 264–614 (WHRSRLSRSH…IEAIELSGPR (351 aa)) the chain is on the cytoplasmic side. At T297 the chain carries Phosphothreonine. Positions 300 to 576 (FSPKNILGQG…QVLKVLEGLV (277 aa)) constitute a Protein kinase domain. An ATP-binding site is contributed by 306–314 (LGQGGFGMV). T323 bears the Phosphothreonine mark. K328 is a binding site for ATP. S380 is modified (phosphoserine). Residue D426 is the Proton acceptor of the active site. Phosphothreonine is present on residues T459, T460, and T465. Y473 is subject to Phosphotyrosine. Position 475 is a phosphoserine (S475). A Phosphothreonine modification is found at T476. S480 carries the post-translational modification Phosphoserine. The residue at position 555 (T555) is a Phosphothreonine.

Belongs to the protein kinase superfamily. Ser/Thr protein kinase family.

Its subcellular location is the membrane. It carries out the reaction L-seryl-[protein] + ATP = O-phospho-L-seryl-[protein] + ADP + H(+). It catalyses the reaction L-threonyl-[protein] + ATP = O-phospho-L-threonyl-[protein] + ADP + H(+). The protein is Probable LRR receptor-like serine/threonine-protein kinase At5g45780 of Arabidopsis thaliana (Mouse-ear cress).